A 1029-amino-acid polypeptide reads, in one-letter code: MPVMERVAEETVATNNIQLKARVDDVPCNKLDARHNDMVIQSETANSDCPGSSAHRNVDLTKPPPPEEAAGAKLSVEELTLGNYRIVQGSNNTNVDSPRAGKFEHLYRLARGSAFRAGDGDLDSQPRDMDQMLSRIRQQLAGAPSERQNLKPFMSRRSDQNLEAFSERLRAAGENSIMNAPALISEGVQMKTPVSSSNFSQLLLKRAMKGKGVVGKNQETPPEFVSDQDLGSKEKKLDISKSPTPHDVLPLKSSPKGNGMVSHGDGNHSKSSIGISLREFLRSSYAKREKRHGLCLFRQLVELVDSAHSKRLFLLDLRPSLFTLVPSKKLRYIGNFGKNDLESDVDEDLNRRRPVVEESSSGGRDSKKRKMDLHLNSPGNQLQATSTGRPFKRKSPVIDLNMVDARNPDSCELQQQDYIKNLSVSSVSRKQSMSTWLEEQWYTCPEEINGEDIGEKSNIYALGVLLFELLCHCESGEMHAAMMADLRHRILPPTFLSKYPKEAGFCLWLLHPEPSSRPSARDILKSELICEDDSVKSTAAAEEISELLLHFLSSLEVQKKKKASKLLQDIQTLEDDIKEAERRYSSNVSLVRSHGAIEKRVQSSPLDEHCTTSSALFVPTANTDRLMSNIRQLEDAYFFMRSQINLSSSAATARSDKTLKDRDRCSENQNENQDMSTKGKSSDQLEVFFEGLCKFARYSKFETCGTIRSGDLLNSASVVCSLSFDPDEEHIAAAGISKKIKIFDFNAFMNESVGVHYPLVEMVNKSKLSCVCWNSYIKNYLASTDYDGVVQIWDAGTGQGFSQYTEHQKRAWSVDFSPSDPTKFVSGSDDCSVKLWSINEKRSLGTIWSPANVCCVQFSSYSNHLLAFGSADYKVYCYDLRYVKTPWCTLAGHEKAVSYVKFMDSETIVSASTDNSLKLWNLNKTNSSGLSPGACSLTYKGHTNQKNFVGLSVLDGYIACGSETNEVYSYYKSLPMPMTSYKFGSVDPISGNEYFDDNGQFVSSVCWRKKSNMLVAANSTGNMKLLKLV.

The disordered stretch occupies residues 42–69 (SETANSDCPGSSAHRNVDLTKPPPPEEA). Positions 188-529 (VQMKTPVSSS…ARDILKSELI (342 aa)) constitute a Protein kinase domain. Residues 194–202 (VSSSNFSQL) and Lys216 contribute to the ATP site. Residues 213-269 (VVGKNQETPPEFVSDQDLGSKEKKLDISKSPTPHDVLPLKSSPKGNGMVSHGDGNHS) are disordered. The span at 230 to 239 (LGSKEKKLDI) shows a compositional bias: basic and acidic residues. The Proton acceptor role is filled by Asp316. Residues 347-392 (EDLNRRRPVVEESSSGGRDSKKRKMDLHLNSPGNQLQATSTGRPFK) are disordered. The segment covering 377–388 (SPGNQLQATSTG) has biased composition (polar residues). Residues 557–589 (VQKKKKASKLLQDIQTLEDDIKEAERRYSSNVS) are a coiled coil. Positions 653 to 679 (ARSDKTLKDRDRCSENQNENQDMSTKG) are disordered. Residues 654–666 (RSDKTLKDRDRCS) are compositionally biased toward basic and acidic residues. Residues 667–679 (ENQNENQDMSTKG) are compositionally biased toward polar residues. 7 WD repeats span residues 714 to 753 (NSAS…NESV), 763 to 803 (VNKS…GFSQ), 806 to 846 (EHQK…SLGT), 848 to 888 (WSPA…TPWC), 892 to 930 (GHEK…SSGL), 932 to 971 (PGAC…YSYY), and 997 to 1029 (DNGQ…LKLV). Positions 866 to 881 (LAFGSADYKVYCYDLR) match the DWD box motif.

As to quaternary structure, interacts with CO, COP1, HFR1, HY5 and PHYA. Light induces dissociation of the SPA1/COP1 complex. Binds to CRY1 in response to blue light, this interaction prevents SPA1/COP1 complex formation but stimulate CRY2/COP1 complex, and thus avoid COP1-dependent degradation of the transcription factor HY5 by the proteasome and promotes hypocotyl elongation.

The protein resides in the nucleus speckle. Its subcellular location is the nucleus. The protein localises to the PML body. Controls normal photoperiodic flowering and regulates circadian rhythms. Required for suppression of photomorphogenesis in dark-grown seedlings and for normal elongation growth of adult plants. Integral component of the COP1/SPA E3 ubiquitin-protein ligase complex. Involved in HY5, HFR1, LAF1 and CO degradation. The sequence is that of Protein SUPPRESSOR OF PHYA-105 1 (SPA1) from Arabidopsis thaliana (Mouse-ear cress).